A 1046-amino-acid polypeptide reads, in one-letter code: Protein jim lovell (1046 aa).

A disordered region spans residues 54 to 109 (TSDHAPMHSTPPTTPPTPPPLPLNMSQSASAVTEAATPENSLPATPPSEGALAVPS). Pro residues predominate over residues 65–75 (PTTPPTPPPLP). Residues 140 to 205 (VDVTLVCAET…MYRGEISVPQ (66 aa)) enclose the BTB domain. 7 disordered regions span residues 290–342 (LRRK…DAES), 355–501 (AERD…KLQD), 632–655 (PPFGGHNGGHPGNSGPGNGCPGQA), 686–719 (EFGPASPMSLQGPFNAPDGPPHPPSPLPFPGMSS), 758–791 (RDMPGGPPPFLKKKMPRPKGQHSAPRGGPPRSWT), 851–947 (EMLQ…APNA), and 998–1046 (DCKS…TGHD). A compositionally biased stretch (basic and acidic residues) spans 294–303 (REQESDRDLE). Basic residues predominate over residues 315–324 (PRRKQARPRR). The segment covering 365–380 (QDNSQGEAEKISSSPA) has biased composition (polar residues). Residues 383-412 (LVERAKEQKSMKEEGSDQPRSLNENHHQLE) show a composition bias toward basic and acidic residues. Over residues 413–432 (LDDEDDDDQDHEEEEEQDIE) the composition is skewed to acidic residues. Positions 433–443 (ELIHTTNELRR) are enriched in basic and acidic residues. Low complexity predominate over residues 445–454 (AAAAAANAAA). Over residues 636-651 (GHNGGHPGNSGPGNGC) the composition is skewed to gly residues. Residues 703–714 (DGPPHPPSPLPF) show a composition bias toward pro residues. Residues 768–777 (LKKKMPRPKG) are compositionally biased toward basic residues. The HTH psq-type domain occupies 781–833 (APRGGPPRSWTNTELTEALQHVWNKKMTTSQASRIFGIPYNSLLMYVRGKYGK). Over residues 866-881 (KNEKSKERKEKEKDKN) the composition is skewed to basic and acidic residues. Low complexity-rich tracts occupy residues 882-897 (SMSSNGSGGSANSQGG) and 912-925 (LGPMGQLDLDLGLP).

As to expression, initially expressed at blastoderm stage, transient accumulation at dorso-lateral positions of the embryo and differences along the longitudinal axis. At later stages of embryogenesis, expression is found exclusively in neural anlagen. Expressed in 4 posterior-most ventral unpaired median interneurons (VUM) neurons, VUM interneurons and one progeny of the median neuroblast (MNB).

The protein resides in the nucleus. Has a regulatory role during midline cell development. This chain is Protein jim lovell (lov), found in Drosophila melanogaster (Fruit fly).